A 488-amino-acid chain; its full sequence is Endo-1,6-beta-D-glucanase neg1 (488 aa).

The N-terminal stretch at 1–17 (MRISVGALLGLTALSHA) is a signal peptide. E241 functions as the Proton donor in the catalytic mechanism. The Nucleophile role is filled by E337. N-linked (GlcNAc...) asparagine glycosylation occurs at N422.

It belongs to the glycosyl hydrolase 30 family.

The protein resides in the secreted. The enzyme catalyses Random hydrolysis of (1-&gt;6)-linkages in (1-&gt;6)-beta-D-glucans.. Endoglucanase that has highest activity on the linear beta-1,6-glucan pustulan and lower activity against laminarin (beta-1,3-glucans with beta-1,6-branches). Is active on C.albicans cell walls allowing the release of a previously described cell wall proteins. The sequence is that of Endo-1,6-beta-D-glucanase neg1 from Aspergillus fumigatus (strain ATCC MYA-4609 / CBS 101355 / FGSC A1100 / Af293) (Neosartorya fumigata).